Reading from the N-terminus, the 383-residue chain is Hippurate hydrolase (383 aa).

Belongs to the peptidase M20 family.

The catalysed reaction is N-benzoylglycine + H2O = benzoate + glycine. Functionally, cleaves hippuric acid into benzoic acid and glycine. In Campylobacter jejuni subsp. jejuni serotype O:2 (strain ATCC 700819 / NCTC 11168), this protein is Hippurate hydrolase.